The following is a 1188-amino-acid chain: Adenomatous polyposis coli protein-related protein 1 (1188 aa).

The tract at residues 1 to 50 (MSSSSSDENETTIHRTGSNTGGSGIYSQPRAGSSKRTSNVRHDVSDVDDE) is disordered. The segment at 1 to 486 (MSSSSSDENE…LSLRATRASP (486 aa)) is required for interaction with bar-1 and hmp-2. One copy of the ARM repeat lies at 314–358 (NCLKVLASLLSPDARFTSLVDSATGILKYVSQYLANTSTHLELRS). Residues 579-588 (IQQQQQMQKA) are compositionally biased toward low complexity. Disordered regions lie at residues 579–624 (IQQQ…SMNP), 670–702 (TESE…DGAT), 726–751 (TPNG…GPSL), 778–952 (QSEM…TMRF), 1003–1092 (CSMI…LKDK), and 1157–1181 (YQKP…PNPK). The required for interaction with pry-1 stretch occupies residues 600-1188 (DLDIPTSTVM…NPKQMLVTIV (589 aa)). 2 stretches are compositionally biased toward polar residues: residues 604-624 (PTST…SMNP) and 677-701 (LTSQ…SDGA). Composition is skewed to polar residues over residues 778–788 (QSEMPTSSSTP) and 800–811 (FSPTQKTTSSPA). Composition is skewed to basic and acidic residues over residues 832-843 (RRQDASDADRLL) and 871-900 (EPER…DHNG). Composition is skewed to polar residues over residues 909–929 (WSPQ…SSED), 937–946 (EPNSSTSGAA), 1014–1039 (QRNE…SASS), and 1164–1180 (GRNN…TPNP).

This sequence belongs to the adenomatous polyposis coli (APC) family. As to quaternary structure, interacts (via N-terminus) with bar-1 and hmp-2; the interaction with hmp-2 is relatively weak. Interacts (via C-terminus) with pry-1 (via N-terminus). Probably associates with bar-1, gsk-3, pry-1 in a complex. In terms of tissue distribution, during the L1 stage, expressed in vulval precursor cells (P3-8.p), seam cells and excretory cells.

It is found in the cell junction. It localises to the adherens junction. The protein localises to the cytoplasm. Its subcellular location is the nucleus. In terms of biological role, has a role in endoderm cell specification and pharyngeal development. Required for the migration of epithelial cells, organization of the anterior seam cells and ceh-13 expression during embryo morphogenesis. Prevents hyperactivation of the Wnt signaling pathway during endoderm development, probably by preventing hmp-2 nuclear translocation. During larval development, apr-1 is required for expression of lin-39 in P3-8.p. Shown to negatively regulate Wnt signaling in vulval precursor cells. Has a role in cell division by establishing the polarity of the mother cell which forms the asymmetries of the daughter nuclei. During the L4 larval stage, it is required for the asymmetric division and self-renewal of seam cells. Thought to regulate export of wrm-1 from the nucleus possibly as part of a complex involving pry-1. The chain is Adenomatous polyposis coli protein-related protein 1 from Caenorhabditis elegans.